The chain runs to 132 residues: Fatty acid-binding protein, intestinal (132 aa).

Alanine 2 is modified (N-acetylalanine). Hexadecanoate is bound by residues tryptophan 83 and arginine 107. Tetradecanoate contacts are provided by tryptophan 83 and arginine 107.

Belongs to the calycin superfamily. Fatty-acid binding protein (FABP) family.

Its subcellular location is the cytoplasm. In terms of biological role, FABPs are thought to play a role in the intracellular transport of long-chain fatty acids and their acyl-CoA esters. FABP2 is probably involved in triglyceride-rich lipoprotein synthesis. Binds saturated long-chain fatty acids with a high affinity, but binds with a lower affinity to unsaturated long-chain fatty acids. FABP2 may also help maintain energy homeostasis by functioning as a lipid sensor. In Bos taurus (Bovine), this protein is Fatty acid-binding protein, intestinal (FABP2).